The following is a 244-amino-acid chain: Tyrosine recombinase XerD-like (244 aa).

The Core-binding (CB) domain occupies 1–73 (MRDRISAFLE…ACNQFLYFLY (73 aa)). A Tyr recombinase domain is found at 90–244 (AEKKTEKPEI…KTVLTLEKYR (155 aa)). Catalysis depends on residues lysine 150 and arginine 211. Tyrosine 243 acts as the O-(3'-phospho-DNA)-tyrosine intermediate in catalysis.

This sequence belongs to the 'phage' integrase family. XerD-like subfamily.

The protein resides in the cytoplasm. Putative tyrosine recombinase. Not involved in the cutting and rejoining of the recombining DNA molecules on dif(SL) site. This Streptococcus pneumoniae (strain CGSP14) protein is Tyrosine recombinase XerD-like.